Consider the following 109-residue polypeptide: Nucleoid-associated protein ASA_2087 (109 aa).

2 disordered regions span residues 1–23 (MFGKGGMGNLMKQAQQMQERMQK) and 87–109 (QSKSKMGELTGGMQLPPGMKLPF). Residues 11 to 23 (MKQAQQMQERMQK) show a composition bias toward low complexity.

Belongs to the YbaB/EbfC family. As to quaternary structure, homodimer.

The protein resides in the cytoplasm. The protein localises to the nucleoid. Functionally, binds to DNA and alters its conformation. May be involved in regulation of gene expression, nucleoid organization and DNA protection. This is Nucleoid-associated protein ASA_2087 from Aeromonas salmonicida (strain A449).